The primary structure comprises 128 residues: Large ribosomal subunit protein bL12 (128 aa).

It belongs to the bacterial ribosomal protein bL12 family. As to quaternary structure, homodimer. Part of the ribosomal stalk of the 50S ribosomal subunit. Forms a multimeric L10(L12)X complex, where L10 forms an elongated spine to which 2 to 4 L12 dimers bind in a sequential fashion. Binds GTP-bound translation factors.

Its function is as follows. Forms part of the ribosomal stalk which helps the ribosome interact with GTP-bound translation factors. Is thus essential for accurate translation. This chain is Large ribosomal subunit protein bL12, found in Rubrobacter xylanophilus (strain DSM 9941 / JCM 11954 / NBRC 16129 / PRD-1).